The sequence spans 437 residues: Phosphomethylpyrimidine synthase (437 aa).

Residues asparagine 69, methionine 98, tyrosine 127, histidine 163, 185–187, 226–229, and glutamate 265 contribute to the substrate site; these read SRG and DACR. Histidine 269 provides a ligand contact to Zn(2+). Residue tyrosine 292 participates in substrate binding. Histidine 333 serves as a coordination point for Zn(2+). Residues cysteine 409, cysteine 412, and cysteine 416 each coordinate [4Fe-4S] cluster.

The protein belongs to the ThiC family. The cofactor is [4Fe-4S] cluster.

It carries out the reaction 5-amino-1-(5-phospho-beta-D-ribosyl)imidazole + S-adenosyl-L-methionine = 4-amino-2-methyl-5-(phosphooxymethyl)pyrimidine + CO + 5'-deoxyadenosine + formate + L-methionine + 3 H(+). It participates in cofactor biosynthesis; thiamine diphosphate biosynthesis. In terms of biological role, catalyzes the synthesis of the hydroxymethylpyrimidine phosphate (HMP-P) moiety of thiamine from aminoimidazole ribotide (AIR) in a radical S-adenosyl-L-methionine (SAM)-dependent reaction. The polypeptide is Phosphomethylpyrimidine synthase (Clostridium kluyveri (strain NBRC 12016)).